A 937-amino-acid chain; its full sequence is Diacylglycerol kinase theta (937 aa).

The disordered stretch occupies residues 1-48; that stretch reads MATAAESGARTWPGSGSPRLGSPAGSPVLGISGRARPGSGPERTGRAI. Phosphoserine is present on residues serine 22 and serine 26. 3 Phorbol-ester/DAG-type zinc fingers span residues 54-102, 115-162, and 177-228; these read GHSF…KTPC, AHCF…CSDC, and HHHW…TPEC. A disordered region spans residues 359–378; the sequence is GKAGTTEEETSKDSGPGDSV. The 100-residue stretch at 390–489 folds into the Ras-associating domain; it reads TQEILKIYPD…TRFYVAEARA (100 aa). Short sequence motifs (LXXLL motif) lie at residues 550–554 and 569–573; these read LYMLA and LPDVL. The region spanning 579-716 is the DAGKc domain; it reads PDCCPLLVFV…MDRWTILLDA (138 aa). The disordered stretch occupies residues 911–937; the sequence is AKQKPRKAGAIRDTRVDTLPAPEGNPL.

The protein belongs to the eukaryotic diacylglycerol kinase family. As to quaternary structure, interacts with RHOA (constitutively activated, GTP-bound); the interaction inhibits DGKQ. Interacts with PRKCE. Interacts with PRKCH. Interacts with PLCB1. Interacts with NR5A1; the interaction requires both LXXLL motifs in DGKQ and is required for full phosphatidic acid-mediated activation of NR5A1. Post-translationally, phosphorylated by PRKCE and PRKCH in vitro. Widely expressed with higher expression in the brain and, to a lesser extent, in the small intestine, duodenum, and liver. In brain, expressed in gray matter. Expression is most intense in the cerebellar cortex and hippocampus, while moderate expression is seen in the olfactory bulb neuronal layers and brain stem nuclei. In the cerebellar cortex, equally expressed in both the Purkinje cell somata and the granule cells.

Its subcellular location is the cytoplasm. It is found in the cytosol. It localises to the cell membrane. The protein localises to the synapse. The protein resides in the cytoskeleton. Its subcellular location is the nucleus. It is found in the nucleus speckle. It localises to the nucleus matrix. It catalyses the reaction a 1,2-diacyl-sn-glycerol + ATP = a 1,2-diacyl-sn-glycero-3-phosphate + ADP + H(+). The catalysed reaction is a 1-O-alkyl-sn-glycerol + ATP = a 1-O-alkyl-sn-glycero-3-phosphate + ADP + H(+). It carries out the reaction 1-O-alkyl-2-acyl-sn-glycerol + ATP = 1-O-alkyl-2-acyl-sn-glycero-3-phosphate + ADP + H(+). The enzyme catalyses 1,2-di-(9Z-octadecenoyl)-sn-glycerol + ATP = 1,2-di-(9Z-octadecenoyl)-sn-glycero-3-phosphate + ADP + H(+). It catalyses the reaction 1-O-hexadecyl-sn-glycerol + ATP = 1-O-hexadecyl-sn-glycero-3-phosphate + ADP + H(+). The catalysed reaction is 1-O-hexadecyl-2-acetyl-sn-glycerol + ATP = 1-O-hexadecyl-2-acetyl-sn-glycero-3-phosphate + ADP + H(+). It carries out the reaction 1-octadecanoyl-2-(5Z,8Z,11Z,14Z-eicosatetraenoyl)-sn-glycerol + ATP = 1-octadecanoyl-2-(5Z,8Z,11Z,14Z-eicosatetraenoyl)-sn-glycero-3-phosphate + ADP + H(+). It participates in lipid metabolism; glycerolipid metabolism. Its activity is regulated as follows. Activated by phosphatidylserine. In terms of biological role, diacylglycerol kinase that converts diacylglycerol/DAG into phosphatidic acid/phosphatidate/PA and regulates the respective levels of these two bioactive lipids. Thereby, acts as a central switch between the signaling pathways activated by these second messengers with different cellular targets and opposite effects in numerous biological processes. Within the adrenocorticotropic hormone signaling pathway, produces phosphatidic acid which in turn activates NR5A1 and subsequent steroidogenic gene transcription. Also functions downstream of the nerve growth factor signaling pathway being specifically activated in the nucleus by the growth factor. Through its diacylglycerol activity also regulates synaptic vesicle endocytosis. This chain is Diacylglycerol kinase theta, found in Rattus norvegicus (Rat).